The following is a 351-amino-acid chain: C-X-C chemokine receptor type 1 (351 aa).

The Extracellular segment spans residues 1-46 (MSNITDPQMWDYDGDPNFTGMPPIDEDYRPCRLETETLNKYVVIVT). An N-linked (GlcNAc...) asparagine glycan is attached at Asn3. A helical membrane pass occupies residues 47–67 (YALVFLLSLLGNSLVMLVILY). At 68–76 (SRVGRSVTD) the chain is on the cytoplasmic side. The helical transmembrane segment at 77-97 (VYLLNLALADLLFALTLPIWA) threads the bilayer. At 98-112 (VSKVNGWIFGTLLCK) the chain is on the extracellular side. A disulfide bridge links Cys111 with Cys188. Residues 113–133 (VVSLLKEVNFYSGILLLACIS) traverse the membrane as a helical segment. Residues 134 to 154 (VDRYLAIVHATRTLTQKRHLV) lie on the Cytoplasmic side of the membrane. The chain crosses the membrane as a helical span at residues 155 to 175 (KFVCLSCWGLSMILSLPFFLF). Residues 176–209 (RQAYHPKNSSPVCYEVLGNDTAKWRMVLRILPHT) lie on the Extracellular side of the membrane. Asn194 is a glycosylation site (N-linked (GlcNAc...) asparagine). A helical transmembrane segment spans residues 210 to 230 (FGFIVPLFVMLFCYGFALCTL). Topologically, residues 231 to 243 (FKAHMGQKHRAMR) are cytoplasmic. A helical membrane pass occupies residues 244–264 (VIFAVVLIFLLCWLPYNLVLL). At 265–289 (ADTLMRTQLIKESCERRNDIGWALD) the chain is on the extracellular side. Residues 290–310 (ATEILGFLHSCLNPIIYAFIG) traverse the membrane as a helical segment. Residues 311 to 351 (QNFRHGFLKILAMHGLVSKEFLARHHVTSYTSSSVNVSSNL) are Cytoplasmic-facing.

It belongs to the G-protein coupled receptor 1 family. Interacts with IL8. Interacts with GNAI2.

Its subcellular location is the cell membrane. Receptor to interleukin-8, which is a powerful neutrophils chemotactic factor. Binding of IL-8 to the receptor causes activation of neutrophils. This response is mediated via a G-protein that activates a phosphatidylinositol-calcium second messenger system. This Pongo pygmaeus (Bornean orangutan) protein is C-X-C chemokine receptor type 1 (CXCR1).